The chain runs to 101 residues: Small ribosomal subunit protein bS18c (101 aa).

It belongs to the bacterial ribosomal protein bS18 family. Part of the 30S ribosomal subunit.

The protein localises to the plastid. It localises to the chloroplast. The sequence is that of Small ribosomal subunit protein bS18c from Citrus sinensis (Sweet orange).